Consider the following 812-residue polypeptide: ISWI one complex protein 2 (812 aa).

Disordered regions lie at residues 1 to 21, 614 to 646, 679 to 704, and 762 to 812; these read MRTKRTRGTRNVGASMPAGAA, MGNSHGNRRSSRRPQSTLEPSTKSSRPTDKRKP, AKQRKQQEDRERRKKMKEEKKRLEEL, and QTGS…PPTN. Positions 627–638 are enriched in polar residues; sequence PQSTLEPSTKSS. The stretch at 673–714 forms a coiled coil; sequence ELKIIRAKQRKQQEDRERRKKMKEEKKRLEELAKKRELTESV. Basic and acidic residues predominate over residues 683 to 704; it reads KQQEDRERRKKMKEEKKRLEEL. Over residues 769 to 796 the composition is skewed to low complexity; sequence PQAPQAPQTSQASIQPQQQQQQQQQQQP.

In terms of assembly, component of the ISW1B complex, which at least consists of ISW1, IOC2 and IOC4.

It localises to the nucleus. Functions as a component of the ISW1B complex, which acts in remodeling the chromatin by catalyzing an ATP-dependent alteration in the structure of nucleosomal DNA. The ISW1B complex acts within coding regions to control the amount of RNA polymerase II released into productive elongation and to coordinate elongation with termination and pre-mRNA processing. The chain is ISWI one complex protein 2 (IOC2) from Saccharomyces cerevisiae (strain ATCC 204508 / S288c) (Baker's yeast).